Consider the following 435-residue polypeptide: Xylose isomerase (435 aa).

Residues H100 and D103 contribute to the active site. Mg(2+)-binding residues include E231, E267, H270, D295, D306, D308, and D338.

This sequence belongs to the xylose isomerase family. As to quaternary structure, homotetramer. Mg(2+) is required as a cofactor.

Its subcellular location is the cytoplasm. The enzyme catalyses alpha-D-xylose = alpha-D-xylulofuranose. The sequence is that of Xylose isomerase from Brucella suis biovar 1 (strain 1330).